A 567-amino-acid chain; its full sequence is Proline--tRNA ligase (567 aa).

It belongs to the class-II aminoacyl-tRNA synthetase family. ProS type 1 subfamily. In terms of assembly, homodimer.

Its subcellular location is the cytoplasm. The catalysed reaction is tRNA(Pro) + L-proline + ATP = L-prolyl-tRNA(Pro) + AMP + diphosphate. In terms of biological role, catalyzes the attachment of proline to tRNA(Pro) in a two-step reaction: proline is first activated by ATP to form Pro-AMP and then transferred to the acceptor end of tRNA(Pro). As ProRS can inadvertently accommodate and process non-cognate amino acids such as alanine and cysteine, to avoid such errors it has two additional distinct editing activities against alanine. One activity is designated as 'pretransfer' editing and involves the tRNA(Pro)-independent hydrolysis of activated Ala-AMP. The other activity is designated 'posttransfer' editing and involves deacylation of mischarged Ala-tRNA(Pro). The misacylated Cys-tRNA(Pro) is not edited by ProRS. In Geobacillus thermodenitrificans (strain NG80-2), this protein is Proline--tRNA ligase.